The sequence spans 304 residues: Phosphonates import ATP-binding protein PhnC 1 (304 aa).

The region spanning 4–240 (VSLQNVTKLF…VIDDLYYAGS (237 aa)) is the ABC transporter domain. 37 to 44 (GPSGAGKS) is a binding site for ATP. The interval 240–304 (SESTPVSHGD…TETDTGEAQL (65 aa)) is disordered. Positions 263–272 (TSVSSDMETT) are enriched in polar residues. Positions 289–304 (TDTETDTETDTGEAQL) are enriched in acidic residues.

It belongs to the ABC transporter superfamily. Phosphonates importer (TC 3.A.1.9.1) family. In terms of assembly, the complex is composed of two ATP-binding proteins (PhnC), two transmembrane proteins (PhnE) and a solute-binding protein (PhnD).

The protein localises to the cell membrane. The catalysed reaction is phosphonate(out) + ATP + H2O = phosphonate(in) + ADP + phosphate + H(+). Functionally, part of the ABC transporter complex PhnCDE involved in phosphonates import. Responsible for energy coupling to the transport system. The chain is Phosphonates import ATP-binding protein PhnC 1 from Haloquadratum walsbyi (strain DSM 16790 / HBSQ001).